A 262-amino-acid chain; its full sequence is Probable cutinase 1 (262 aa).

Positions M1 to S19 are cleaved as a signal peptide. Disulfide bonds link C48–C127 and C74–C88. The active-site Nucleophile is S138. The cysteines at positions 189 and 196 are disulfide-linked. The active site involves D193. H206 functions as the Proton donor/acceptor in the catalytic mechanism. Residues S228–L262 are disordered.

Belongs to the cutinase family.

It is found in the secreted. It catalyses the reaction cutin + H2O = cutin monomers.. Catalyzes the hydrolysis of complex carboxylic polyesters found in the cell wall of plants. Degrades cutin, a macromolecule that forms the structure of the plant cuticle. In Aspergillus niger (strain ATCC MYA-4892 / CBS 513.88 / FGSC A1513), this protein is Probable cutinase 1.